Here is a 473-residue protein sequence, read N- to C-terminus: Photosystem II CP43 reaction center protein (473 aa).

Residues 1–14 constitute a propeptide that is removed on maturation; it reads MKTLYSLRRFYPVE. T15 carries the post-translational modification N-acetylthreonine. T15 carries the post-translational modification Phosphothreonine. 5 helical membrane passes run 69-93, 134-155, 178-200, 255-275, and 291-312; these read LFEV…PHLA, LLGP…KDRN, KALY…RKIT, KPFA…LSYS, and WFNN…ASQA. E367 contributes to the [CaMn4O5] cluster binding site. A helical transmembrane segment spans residues 447-471; sequence RARAAAAGFEKGIDRDFEPVLSMTP.

Belongs to the PsbB/PsbC family. PsbC subfamily. In terms of assembly, PSII is composed of 1 copy each of membrane proteins PsbA, PsbB, PsbC, PsbD, PsbE, PsbF, PsbH, PsbI, PsbJ, PsbK, PsbL, PsbM, PsbT, PsbX, PsbY, PsbZ, Psb30/Ycf12, at least 3 peripheral proteins of the oxygen-evolving complex and a large number of cofactors. It forms dimeric complexes. It depends on Binds multiple chlorophylls and provides some of the ligands for the Ca-4Mn-5O cluster of the oxygen-evolving complex. It may also provide a ligand for a Cl- that is required for oxygen evolution. PSII binds additional chlorophylls, carotenoids and specific lipids. as a cofactor.

The protein resides in the plastid. It is found in the chloroplast thylakoid membrane. In terms of biological role, one of the components of the core complex of photosystem II (PSII). It binds chlorophyll and helps catalyze the primary light-induced photochemical processes of PSII. PSII is a light-driven water:plastoquinone oxidoreductase, using light energy to abstract electrons from H(2)O, generating O(2) and a proton gradient subsequently used for ATP formation. In Morus indica (Mulberry), this protein is Photosystem II CP43 reaction center protein.